The following is a 336-amino-acid chain: UDP-N-acetylenolpyruvoylglucosamine reductase (336 aa).

Residues 17–188 (LRSLAERFVE…WDVTFRLPKK (172 aa)) form the FAD-binding PCMH-type domain. The active site involves R164. S237 (proton donor) is an active-site residue. Residue E332 is part of the active site.

The protein belongs to the MurB family. FAD serves as cofactor.

The protein resides in the cytoplasm. The enzyme catalyses UDP-N-acetyl-alpha-D-muramate + NADP(+) = UDP-N-acetyl-3-O-(1-carboxyvinyl)-alpha-D-glucosamine + NADPH + H(+). The protein operates within cell wall biogenesis; peptidoglycan biosynthesis. Cell wall formation. The protein is UDP-N-acetylenolpyruvoylglucosamine reductase of Bdellovibrio bacteriovorus (strain ATCC 15356 / DSM 50701 / NCIMB 9529 / HD100).